The following is a 320-amino-acid chain: Cytochrome f (320 aa).

The first 35 residues, 1–35, serve as a signal peptide directing secretion; sequence MQTRKTLSWIKEEITRSISLSLMLSIITHASLSNA. 4 residues coordinate heme: Tyr36, Cys56, Cys59, and His60. A helical transmembrane segment spans residues 286–306; it reads VQGLLFFLTSVLLAQIFLVLK.

This sequence belongs to the cytochrome f family. In terms of assembly, the 4 large subunits of the cytochrome b6-f complex are cytochrome b6, subunit IV (17 kDa polypeptide, petD), cytochrome f and the Rieske protein, while the 4 small subunits are PetG, PetL, PetM and PetN. The complex functions as a dimer. The cofactor is heme.

The protein resides in the plastid. Its subcellular location is the chloroplast thylakoid membrane. Its function is as follows. Component of the cytochrome b6-f complex, which mediates electron transfer between photosystem II (PSII) and photosystem I (PSI), cyclic electron flow around PSI, and state transitions. This is Cytochrome f from Pelargonium hortorum (Common geranium).